Consider the following 190-residue polypeptide: Protein LZIC (190 aa).

A coiled-coil region spans residues 6 to 64 (KSETSKLRQNMEEQLDRLMQQLQDLEECREDLEEEEYEETKKETLEQLSEFNDSLKKLM).

It belongs to the CTNNBIP1 family. In terms of assembly, does not interact with CTNNB1.

Its function is as follows. Required for neuronal survival during early development. This Danio rerio (Zebrafish) protein is Protein LZIC (lzic).